Consider the following 1481-residue polypeptide: DNA-directed RNA polymerase subunit beta'' (1481 aa).

The Zn(2+) site is built by Cys217, Cys291, Cys298, and Cys301.

It belongs to the RNA polymerase beta' chain family. RpoC2 subfamily. In plastids the minimal PEP RNA polymerase catalytic core is composed of four subunits: alpha, beta, beta', and beta''. When a (nuclear-encoded) sigma factor is associated with the core the holoenzyme is formed, which can initiate transcription. Zn(2+) is required as a cofactor.

Its subcellular location is the plastid. The protein resides in the chloroplast. It catalyses the reaction RNA(n) + a ribonucleoside 5'-triphosphate = RNA(n+1) + diphosphate. DNA-dependent RNA polymerase catalyzes the transcription of DNA into RNA using the four ribonucleoside triphosphates as substrates. This Trieres chinensis (Marine centric diatom) protein is DNA-directed RNA polymerase subunit beta''.